Consider the following 337-residue polypeptide: Homeobox protein knotted-1-like 4 (337 aa).

Disordered regions lie at residues 1 to 56 (MEQQ…SFHE) and 159 to 190 (FTLD…GLPE). Residues 27–38 (PTSTSTSPAVPS) show a composition bias toward low complexity. The region spanning 200–220 (ELKSHLLNKYSGYLSSLWREL) is the ELK domain. The segment at residues 221-284 (SKKKKKGKLP…NQRKRHWKPT (64 aa)) is a DNA-binding region (homeobox; TALE-type).

The protein belongs to the TALE/KNOX homeobox family.

The protein localises to the nucleus. This chain is Homeobox protein knotted-1-like 4 (OSH10), found in Oryza sativa subsp. japonica (Rice).